Here is a 290-residue protein sequence, read N- to C-terminus: Acetylglutamate kinase (290 aa).

Substrate contacts are provided by residues 65 to 66, arginine 87, and asparagine 186; that span reads GG.

This sequence belongs to the acetylglutamate kinase family. ArgB subfamily.

The protein localises to the cytoplasm. The enzyme catalyses N-acetyl-L-glutamate + ATP = N-acetyl-L-glutamyl 5-phosphate + ADP. It participates in amino-acid biosynthesis; L-arginine biosynthesis; N(2)-acetyl-L-ornithine from L-glutamate: step 2/4. Functionally, catalyzes the ATP-dependent phosphorylation of N-acetyl-L-glutamate. In Mycobacterium sp. (strain KMS), this protein is Acetylglutamate kinase.